Consider the following 151-residue polypeptide: Small ribosomal subunit protein uS11 (151 aa).

Belongs to the universal ribosomal protein uS11 family.

The chain is Small ribosomal subunit protein uS11 (RPS14) from Podocoryna carnea (Hydrozoan).